We begin with the raw amino-acid sequence, 130 residues long: Methylglyoxal synthase (130 aa).

One can recognise an MGS-like domain in the interval 1–130 (MSTPRIALIA…DLARRLPVKA (130 aa)). Residues His-11, Lys-15, 37 to 40 (TGTT), and 57 to 58 (SG) each bind substrate. Asp-63 acts as the Proton donor/acceptor in catalysis. His-90 serves as a coordination point for substrate.

It belongs to the methylglyoxal synthase family.

The enzyme catalyses dihydroxyacetone phosphate = methylglyoxal + phosphate. Catalyzes the formation of methylglyoxal from dihydroxyacetone phosphate. The chain is Methylglyoxal synthase from Burkholderia thailandensis (strain ATCC 700388 / DSM 13276 / CCUG 48851 / CIP 106301 / E264).